The sequence spans 206 residues: Ribosomal RNA large subunit methyltransferase E (206 aa).

Glycine 60, tryptophan 62, aspartate 80, aspartate 96, and aspartate 121 together coordinate S-adenosyl-L-methionine. The active-site Proton acceptor is the lysine 161.

This sequence belongs to the class I-like SAM-binding methyltransferase superfamily. RNA methyltransferase RlmE family.

It is found in the cytoplasm. It carries out the reaction uridine(2552) in 23S rRNA + S-adenosyl-L-methionine = 2'-O-methyluridine(2552) in 23S rRNA + S-adenosyl-L-homocysteine + H(+). In terms of biological role, specifically methylates the uridine in position 2552 of 23S rRNA at the 2'-O position of the ribose in the fully assembled 50S ribosomal subunit. This is Ribosomal RNA large subunit methyltransferase E from Hahella chejuensis (strain KCTC 2396).